We begin with the raw amino-acid sequence, 738 residues long: MDCNCFDPQWPADELLMKYQYISDFFIAVAYFSIPIELVYFVQKSAVFPYRWVLVQFGAFIVLCGATHLINLWTSTAHTRTLAIVMTTAKVLTAVVSCATALMLVHIIPDLLSVKTRELFLKNKAAELDREMGLIRTQEETGRYVRMLTHEIRSTLDRHTILKTTLVELGRTLALEECALWMPTPPGLELQLSYTLRHQNPIGFTVPIQLPVINQVFGTNRAVKISPNSPVARLRPAGKYMPGEVVAVRVPLLHLSNFQINDWPELSTKRYALMVLMLPSGSARQWHVHELELVEVVADQVAVALSHAAILEESMRARDLLMEQNVALDLARREAEMAVRARNDFLAVMNHEMRTPMHAIIALSSLLQETELTPEQRLMVETILKSSNLLATLINDVLDLSRLEDGSLQLDVGTFNLHVLFRKVLNLIKPIASVKNCLSRLTCLQICPEFAIGDEKRLMQILLNVVGNAVKFSKEGSVSISAVAAKSESLSDPRAPEFFPVQSENHFYLRVQVKDTGSGINPQDIPKLFCKFAQNQALATKSSGGTGLGLAISKRFVNLMEGHIWIESEGLGKGSTAIFIVKLGIPGRSNEPKLPFMPRLPANHMQMTFQGLKVLIMDDNGFSRMVTKGLLVHLGCDVTTVSSGDECLRVLTQEHKVVFMDVSIPGIDCYEVAVQIHEKFGKHHNRPLIVALTGNTDRVTKENCMRVGMDGVILKPVSVDKMRSVLSELLEHGVILQS.

3 helical membrane-spanning segments follow: residues 22–42, 53–73, and 91–111; these read ISDF…VYFV, VLVQ…INLW, and VLTA…IPDL. Residues cysteine 64 and histidine 68 each coordinate Cu cation. The region spanning 157–305 is the GAF domain; sequence DRHTILKTTL…VVADQVAVAL (149 aa). The 238-residue stretch at 348-585 folds into the Histidine kinase domain; sequence VMNHEMRTPM…TAIFIVKLGI (238 aa). Histidine 351 bears the Phosphohistidine; by autocatalysis mark. Residues 613 to 730 form the Response regulatory domain; the sequence is KVLIMDDNGF…KMRSVLSELL (118 aa). Aspartate 661 carries the post-translational modification 4-aspartylphosphate.

The protein belongs to the ethylene receptor family. Homodimer; disulfide-linked. Cu cation serves as cofactor. Activation probably requires a transfer of a phosphate group between a His in the transmitter domain and an Asp of the receiver domain.

Its subcellular location is the endoplasmic reticulum membrane. It carries out the reaction ATP + protein L-histidine = ADP + protein N-phospho-L-histidine.. Its function is as follows. May act early in the ethylene signal transduction pathway, possibly as an ethylene receptor, or as a regulator of the pathway. This chain is Ethylene receptor (ETR1), found in Nicotiana tabacum (Common tobacco).